The primary structure comprises 71 residues: Small ribosomal subunit protein bS21 (71 aa).

This sequence belongs to the bacterial ribosomal protein bS21 family.

This chain is Small ribosomal subunit protein bS21, found in Acidithiobacillus ferrooxidans (strain ATCC 23270 / DSM 14882 / CIP 104768 / NCIMB 8455) (Ferrobacillus ferrooxidans (strain ATCC 23270)).